A 126-amino-acid chain; its full sequence is Histone H2B (126 aa).

The span at 1 to 12 shows a compositional bias: low complexity; it reads MPEPAKSAPAAK. Positions 1–35 are disordered; the sequence is MPEPAKSAPAAKKGSKKAVSKVQKKDGKKRRKSRK. 2 positions are modified to N6-acetyllysine: lysine 6 and lysine 13. The residue at position 15 (serine 15) is a Phosphoserine. N6-acetyllysine occurs at positions 16 and 21. Serine 113 carries an O-linked (GlcNAc) serine glycan. Residue lysine 121 forms a Glycyl lysine isopeptide (Lys-Gly) (interchain with G-Cter in ubiquitin) linkage.

Belongs to the histone H2B family. As to quaternary structure, the nucleosome is a histone octamer containing two molecules each of H2A, H2B, H3 and H4 assembled in one H3-H4 heterotetramer and two H2A-H2B heterodimers. The octamer wraps approximately 147 bp of DNA. Post-translationally, monoubiquitination of Lys-121 by BRE1 gives a specific tag for epigenetic transcriptional activation and is also prerequisite for histone H3 'Lys-4' and 'Lys-79' methylation. In terms of processing, phosphorylated on Ser-15 during apoptosis; which facilitates apoptotic chromatin condensation. GlcNAcylation at Ser-113 promotes monoubiquitination of Lys-121. It fluctuates in response to extracellular glucose, and associates with transcribed genes. Expressed by the skin granular glands.

It localises to the nucleus. The protein localises to the secreted. Its subcellular location is the chromosome. In terms of biological role, core component of nucleosome. Nucleosomes wrap and compact DNA into chromatin, limiting DNA accessibility to the cellular machineries which require DNA as a template. Histones thereby play a central role in transcription regulation, DNA repair, DNA replication and chromosomal stability. DNA accessibility is regulated via a complex set of post-translational modifications of histones, also called histone code, and nucleosome remodeling. Functionally, has antibacterial activity against the Gram-negative bacteria E.coli and the Gram-positive bacteria S.aureus. The polypeptide is Histone H2B (Zhangixalus schlegelii (Japanese gliding frog)).